We begin with the raw amino-acid sequence, 209 residues long: Max dimerization protein 4 (209 aa).

Positions 6–23 (LLLLLEAAEYLERRDREA) are interaction with SIN3A and SIN3B. The bHLH domain occupies 53-105 (NNRSSHNELEKHRRAKLRLYLEQLKQLGPLGPDSTRHTTLSLLKRAKMHIKKL). A disordered region spans residues 137–209 (SVERVRTDST…CRRPGCPGLS (73 aa)). A compositionally biased stretch (acidic residues) spans 153 to 163 (DDSEQEVDIEG). The span at 185–195 (SLQSSGCSDSS) shows a compositional bias: polar residues.

As to quaternary structure, efficient DNA binding requires dimerization with another bHLH protein. Binds DNA as a heterodimer with MAX. Interacts with SIN3A AND SIN3B. Interacts with RNF17.

It localises to the nucleus. Functionally, transcriptional repressor. Binds with MAX to form a sequence-specific DNA-binding protein complex which recognizes the core sequence 5'-CAC[GA]TG-3'. Antagonizes MYC transcriptional activity by competing for MAX and suppresses MYC dependent cell transformation. This chain is Max dimerization protein 4 (Mxd4), found in Mus musculus (Mouse).